The primary structure comprises 483 residues: SET domain and MYND-type zinc finger protein 6 (483 aa).

The SET domain maps to 4–228 (PLIASVILPE…KDEQLFISYI (225 aa)). Zn(2+) contacts are provided by C49, C52, C62, C65, C71, C75, H83, and C87. Residues 49-87 (CSTCTEEKVKTQRCAACKIIHYCSKGCQKADWPFHKLEC) form an MYND-type zinc finger.

The protein belongs to the class V-like SAM-binding methyltransferase superfamily.

The protein localises to the cytoplasm. It localises to the nucleus. The protein is SET domain and MYND-type zinc finger protein 6 (set6) of Schizosaccharomyces pombe (strain 972 / ATCC 24843) (Fission yeast).